The primary structure comprises 396 residues: Elongation factor Tu (396 aa).

Positions 10-206 (KPHVNVGTIG…ALDTYIPTPE (197 aa)) constitute a tr-type G domain. The interval 19–26 (GHVDHGKT) is G1. 19–26 (GHVDHGKT) is a GTP binding site. Mg(2+) is bound at residue threonine 26. The G2 stretch occupies residues 60-64 (GITIN). The tract at residues 81 to 84 (DCPG) is G3. Residues 81–85 (DCPGH) and 136–139 (NKCD) each bind GTP. The segment at 136–139 (NKCD) is G4. The segment at 174–176 (SAK) is G5.

Belongs to the TRAFAC class translation factor GTPase superfamily. Classic translation factor GTPase family. EF-Tu/EF-1A subfamily. Monomer.

The protein localises to the cytoplasm. It catalyses the reaction GTP + H2O = GDP + phosphate + H(+). Functionally, GTP hydrolase that promotes the GTP-dependent binding of aminoacyl-tRNA to the A-site of ribosomes during protein biosynthesis. The protein is Elongation factor Tu of Polynucleobacter asymbioticus (strain DSM 18221 / CIP 109841 / QLW-P1DMWA-1) (Polynucleobacter necessarius subsp. asymbioticus).